The following is a 795-amino-acid chain: Phenylalanine--tRNA ligase beta subunit (795 aa).

One can recognise a tRNA-binding domain in the interval 39-148 (AGEFNGVVVG…ADAPVGKDFR (110 aa)). Positions 401 to 476 (PKLNKVQLRR…RIYGYNSIPN (76 aa)) constitute a B5 domain. Mg(2+) is bound by residues Asp-454, Asp-460, Glu-463, and Glu-464. In terms of domain architecture, FDX-ACB spans 701-794 (SKFPANKRDL…LKDRFNAYLR (94 aa)).

The protein belongs to the phenylalanyl-tRNA synthetase beta subunit family. Type 1 subfamily. Tetramer of two alpha and two beta subunits. Requires Mg(2+) as cofactor.

It is found in the cytoplasm. It catalyses the reaction tRNA(Phe) + L-phenylalanine + ATP = L-phenylalanyl-tRNA(Phe) + AMP + diphosphate + H(+). This Mannheimia succiniciproducens (strain KCTC 0769BP / MBEL55E) protein is Phenylalanine--tRNA ligase beta subunit.